Reading from the N-terminus, the 440-residue chain is Chromosome partition protein MukF (440 aa).

Residues 208–236 (LSETSGTLRELQDTLEAAGDKLQANLLRI) are leucine-zipper.

Belongs to the MukF family. Interacts, and probably forms a ternary complex, with MukE and MukB via its C-terminal region. The complex formation is stimulated by calcium or magnesium. It is required for an interaction between MukE and MukB.

Its subcellular location is the cytoplasm. The protein resides in the nucleoid. Functionally, involved in chromosome condensation, segregation and cell cycle progression. May participate in facilitating chromosome segregation by condensation DNA from both sides of a centrally located replisome during cell division. Not required for mini-F plasmid partitioning. Probably acts via its interaction with MukB and MukE. Overexpression results in anucleate cells. It has a calcium binding activity. The polypeptide is Chromosome partition protein MukF (Salmonella agona (strain SL483)).